We begin with the raw amino-acid sequence, 264 residues long: Adenosylcobinamide-GDP ribazoletransferase (264 aa).

The next 7 helical transmembrane spans lie at 10–30, 43–63, 113–133, 141–161, 183–203, 205–225, and 243–263; these read LFFI…VGYT, LVGA…AQVW, LGSY…VALY, VQAL…PVAL, VSDA…AAAW, LGAS…LAAF, and GAAQ…GVWF.

This sequence belongs to the CobS family. The cofactor is Mg(2+).

Its subcellular location is the cell inner membrane. The enzyme catalyses alpha-ribazole + adenosylcob(III)inamide-GDP = adenosylcob(III)alamin + GMP + H(+). It carries out the reaction alpha-ribazole 5'-phosphate + adenosylcob(III)inamide-GDP = adenosylcob(III)alamin 5'-phosphate + GMP + H(+). It functions in the pathway cofactor biosynthesis; adenosylcobalamin biosynthesis; adenosylcobalamin from cob(II)yrinate a,c-diamide: step 7/7. Joins adenosylcobinamide-GDP and alpha-ribazole to generate adenosylcobalamin (Ado-cobalamin). Also synthesizes adenosylcobalamin 5'-phosphate from adenosylcobinamide-GDP and alpha-ribazole 5'-phosphate. This Leptothrix cholodnii (strain ATCC 51168 / LMG 8142 / SP-6) (Leptothrix discophora (strain SP-6)) protein is Adenosylcobinamide-GDP ribazoletransferase.